Reading from the N-terminus, the 348-residue chain is Oxygen-dependent coproporphyrinogen-III oxidase (348 aa).

A substrate-binding site is contributed by Ser104. A divalent metal cation contacts are provided by His108 and His118. His118 functions as the Proton donor in the catalytic mechanism. 120–122 (NYR) lines the substrate pocket. A divalent metal cation is bound by residues His152 and His182. Residues 272-307 (YAEFNLVWDRGTIFGLQTNGRTESILMSLPPLARWE) form an important for dimerization region.

The protein belongs to the aerobic coproporphyrinogen-III oxidase family. Homodimer. A divalent metal cation serves as cofactor.

The protein localises to the cytoplasm. The catalysed reaction is coproporphyrinogen III + O2 + 2 H(+) = protoporphyrinogen IX + 2 CO2 + 2 H2O. The protein operates within porphyrin-containing compound metabolism; protoporphyrin-IX biosynthesis; protoporphyrinogen-IX from coproporphyrinogen-III (O2 route): step 1/1. Functionally, involved in the heme and chlorophyll biosynthesis. Catalyzes the aerobic oxidative decarboxylation of propionate groups of rings A and B of coproporphyrinogen-III to yield the vinyl groups in protoporphyrinogen-IX. This Prochlorococcus marinus (strain NATL1A) protein is Oxygen-dependent coproporphyrinogen-III oxidase.